Consider the following 274-residue polypeptide: Sulfur carrier protein FdhD (274 aa).

Cysteine 121 functions as the Cysteine persulfide intermediate in the catalytic mechanism. Residue 258–263 (FSKPGR) participates in Mo-bis(molybdopterin guanine dinucleotide) binding.

It belongs to the FdhD family.

Its subcellular location is the cytoplasm. Its function is as follows. Required for formate dehydrogenase (FDH) activity. Acts as a sulfur carrier protein that transfers sulfur from IscS to the molybdenum cofactor prior to its insertion into FDH. The chain is Sulfur carrier protein FdhD from Yersinia pseudotuberculosis serotype O:3 (strain YPIII).